A 465-amino-acid polypeptide reads, in one-letter code: MRTEWVSARKGQANVSQMHYARKGVVTEEMAYVAKIENLPESLVMEEVARGRMIIPANVNHTNLEPMAIGIASKCKVNANIGASPNASDAAEEVNKLKLAVKYGADTVMDLSTGGVNLDEVRTSIIGASSVPIGTVPVYQALESVHGSIEKLDEDDFLHIIEKHCQQGVDYQTIHAGLLIEHLPKVKGRLTGIVSRGGGILAQWMLYHHRQNPLFTRFDDICEIFKRYDCTFSLGDSLRPGCQHDASDAAQLAELKTLGDLTRRAWKHDVQVMVEGPGHVPLDQIEFNVKKQMEECNEAPFYVLGPLVTDIAPGYDHITSAIGAAMAGWHGTAMLCYVTPKEHLGLPNAEDVREGLIAYKIAAHAADIARHRPGARDRDDELSRARYAFDWNKQFELSLDPERAKEYHDETLPADIYKQAEFCSMCGPKHCPMQTKITDADLDGLEQVLKSQGAAELVGVKQDKL.

Substrate-binding positions include N80, M109, Y139, H175, 195–197 (SRG), 236–239 (DSLR), and E275. H279 contributes to the Zn(2+) binding site. Y302 lines the substrate pocket. H343 serves as a coordination point for Zn(2+). [4Fe-4S] cluster contacts are provided by C423, C426, and C431.

Belongs to the ThiC family. It depends on [4Fe-4S] cluster as a cofactor.

The enzyme catalyses 5-amino-1-(5-phospho-beta-D-ribosyl)imidazole + S-adenosyl-L-methionine = 4-amino-2-methyl-5-(phosphooxymethyl)pyrimidine + CO + 5'-deoxyadenosine + formate + L-methionine + 3 H(+). Its pathway is cofactor biosynthesis; thiamine diphosphate biosynthesis. Its function is as follows. Catalyzes the synthesis of the hydroxymethylpyrimidine phosphate (HMP-P) moiety of thiamine from aminoimidazole ribotide (AIR) in a radical S-adenosyl-L-methionine (SAM)-dependent reaction. This Synechococcus sp. (strain CC9311) protein is Phosphomethylpyrimidine synthase.